Consider the following 118-residue polypeptide: Aspartate 1-decarboxylase (118 aa).

Catalysis depends on S25, which acts as the Schiff-base intermediate with substrate; via pyruvic acid. S25 carries the post-translational modification Pyruvic acid (Ser). A substrate-binding site is contributed by T57. Residue Y58 is the Proton donor of the active site. A substrate-binding site is contributed by 73-75 (GAA).

The protein belongs to the PanD family. Heterooctamer of four alpha and four beta subunits. Pyruvate is required as a cofactor. In terms of processing, is synthesized initially as an inactive proenzyme, which is activated by self-cleavage at a specific serine bond to produce a beta-subunit with a hydroxyl group at its C-terminus and an alpha-subunit with a pyruvoyl group at its N-terminus.

The protein localises to the cytoplasm. It catalyses the reaction L-aspartate + H(+) = beta-alanine + CO2. Its pathway is cofactor biosynthesis; (R)-pantothenate biosynthesis; beta-alanine from L-aspartate: step 1/1. Its function is as follows. Catalyzes the pyruvoyl-dependent decarboxylation of aspartate to produce beta-alanine. The polypeptide is Aspartate 1-decarboxylase (Syntrophomonas wolfei subsp. wolfei (strain DSM 2245B / Goettingen)).